Here is a 236-residue protein sequence, read N- to C-terminus: Large ribosomal subunit protein uL3 (236 aa).

Belongs to the universal ribosomal protein uL3 family. As to quaternary structure, part of the 50S ribosomal subunit. Forms a cluster with proteins L14 and L19.

Its function is as follows. One of the primary rRNA binding proteins, it binds directly near the 3'-end of the 23S rRNA, where it nucleates assembly of the 50S subunit. The polypeptide is Large ribosomal subunit protein uL3 (Anaeromyxobacter dehalogenans (strain 2CP-C)).